A 99-amino-acid chain; its full sequence is NADH-ubiquinone oxidoreductase chain 2 (99 aa).

The next 2 helical transmembrane spans lie at 22-42 (FLTFIGILLSGITAFYYIQII) and 65-85 (VMISITTLLLILFFADNSIFI).

Belongs to the complex I subunit 2 family.

It is found in the mitochondrion inner membrane. It catalyses the reaction a ubiquinone + NADH + 5 H(+)(in) = a ubiquinol + NAD(+) + 4 H(+)(out). Functionally, core subunit of the mitochondrial membrane respiratory chain NADH dehydrogenase (Complex I) that is believed to belong to the minimal assembly required for catalysis. Complex I functions in the transfer of electrons from NADH to the respiratory chain. The immediate electron acceptor for the enzyme is believed to be ubiquinone. The chain is NADH-ubiquinone oxidoreductase chain 2 (ND2) from Cyanidium caldarium (Red alga).